The primary structure comprises 132 residues: Agouti-signaling protein (132 aa).

Residues Met1 to Ser22 form the signal peptide. Asn39 carries an N-linked (GlcNAc...) asparagine glycan. The interval Lys60–Cys93 is disordered. Basic and acidic residues predominate over residues Arg64–Lys79. Disulfide bonds link Cys93/Cys108, Cys100/Cys114, Cys107/Cys125, Cys111/Cys132, and Cys116/Cys123. Residues Cys93–Cys132 enclose the Agouti domain.

It localises to the secreted. In terms of biological role, involved in the regulation of melanogenesis. The binding of ASP to MC1R precludes alpha-MSH initiated signaling and thus blocks production of cAMP, leading to a down-regulation of eumelanogenesis (brown/black pigment) and thus increasing synthesis of pheomelanin (yellow/red pigment). This chain is Agouti-signaling protein (ASIP), found in Cebuella pygmaea (Pygmy marmoset).